We begin with the raw amino-acid sequence, 211 residues long: Thymidine kinase (211 aa).

ATP-binding positions include 9–16 and 87–90; these read STMNAGKS and DEAQ. E88 (proton acceptor) is an active-site residue. 4 residues coordinate Zn(2+): C145, C147, C182, and H185.

It belongs to the thymidine kinase family. Homotetramer.

Its subcellular location is the cytoplasm. It carries out the reaction thymidine + ATP = dTMP + ADP + H(+). The sequence is that of Thymidine kinase from Rhodopirellula baltica (strain DSM 10527 / NCIMB 13988 / SH1).